We begin with the raw amino-acid sequence, 803 residues long: Phenylalanine--tRNA ligase beta subunit (803 aa).

Residues 39–152 (TPGFQKVVAG…PDASPGADAA (114 aa)) form the tRNA-binding domain. Residues 406–480 (RQPVTIELRP…RLYGYNRIPV (75 aa)) form the B5 domain. Residues D458, D464, E467, and E468 each contribute to the Mg(2+) site. An FDX-ACB domain is found at 709–802 (PRFPAVERDL…LEERLGASLR (94 aa)).

It belongs to the phenylalanyl-tRNA synthetase beta subunit family. Type 1 subfamily. As to quaternary structure, tetramer of two alpha and two beta subunits. Mg(2+) is required as a cofactor.

Its subcellular location is the cytoplasm. It catalyses the reaction tRNA(Phe) + L-phenylalanine + ATP = L-phenylalanyl-tRNA(Phe) + AMP + diphosphate + H(+). The chain is Phenylalanine--tRNA ligase beta subunit from Moorella thermoacetica (strain ATCC 39073 / JCM 9320).